Reading from the N-terminus, the 439-residue chain is ATP-dependent RNA helicase SrmB (439 aa).

The Q motif motif lies at 4 to 32; sequence SQFEQFDLSPELLKALEKKGYSRPTAIQM. The Helicase ATP-binding domain occupies 35 to 209; the sequence is IPAAMEESDV…AERLLNDPVK (175 aa). 48–55 is a binding site for ATP; the sequence is APTGTGKT. Positions 157–160 match the DEAD box motif; sequence DEAD. The 151-residue stretch at 237 to 387 folds into the Helicase C-terminal domain; that stretch reads KLLARFIETE…GLEPRTKPPK (151 aa). Positions 381 to 393 are enriched in basic and acidic residues; it reads PRTKPPKDGEVKS. The disordered stretch occupies residues 381–439; that stretch reads PRTKPPKDGEVKSVSKKQKARIKEKREEKKKTEAKKKVKLRHKDTKNIGKRRKPSNSNV. Basic residues-rich tracts occupy residues 394-403 and 412-439; these read VSKKQKARIK and TEAK…NSNV.

Belongs to the DEAD box helicase family. SrmB subfamily. In terms of assembly, interacts with the 50S ribosomal subunit.

It localises to the cytoplasm. It catalyses the reaction ATP + H2O = ADP + phosphate + H(+). DEAD-box RNA helicase involved in the assembly of the 50S ribosomal subunit at low temperature. Exhibits RNA-stimulated ATP hydrolysis and RNA unwinding activity. The protein is ATP-dependent RNA helicase SrmB of Haemophilus influenzae (strain ATCC 51907 / DSM 11121 / KW20 / Rd).